The following is a 54-amino-acid chain: Large ribosomal subunit protein bL33 (54 aa).

The protein belongs to the bacterial ribosomal protein bL33 family.

This chain is Large ribosomal subunit protein bL33, found in Parafrankia sp. (strain EAN1pec).